The primary structure comprises 531 residues: NAD(P)H-quinone oxidoreductase chain 4 (531 aa).

14 helical membrane passes run 9-29, 41-61, 93-113, 117-137, 141-161, 173-193, 217-237, 248-268, 282-302, 311-331, 337-357, 381-401, 422-442, and 469-489; these read FPWL…IPFF, FALS…INGF, MPLI…AWPV, PKLF…VFAV, LLFF…LAIW, FIIY…AMGF, IFCY…VPLH, TAPV…YALL, FAPL…LTSF, IAYS…SFSS, AMLQ…LVGA, FALW…SGFV, VVMA…LLSM, and VYII…PRLV.

Belongs to the complex I subunit 4 family.

It is found in the cellular thylakoid membrane. The enzyme catalyses a plastoquinone + NADH + (n+1) H(+)(in) = a plastoquinol + NAD(+) + n H(+)(out). It carries out the reaction a plastoquinone + NADPH + (n+1) H(+)(in) = a plastoquinol + NADP(+) + n H(+)(out). In terms of biological role, NDH-1 shuttles electrons from NAD(P)H, via FMN and iron-sulfur (Fe-S) centers, to quinones in the respiratory chain. The immediate electron acceptor for the enzyme in this species is believed to be plastoquinone. Couples the redox reaction to proton translocation (for every two electrons transferred, four hydrogen ions are translocated across the cytoplasmic membrane), and thus conserves the redox energy in a proton gradient. This is NAD(P)H-quinone oxidoreductase chain 4 from Prochlorococcus marinus (strain MIT 9301).